Consider the following 130-residue polypeptide: NADH-ubiquinone oxidoreductase chain 1 (130 aa).

Residues 45-65 (SILFMSLFSVMFCLVVYSYLW) traverse the membrane as a helical segment.

This sequence belongs to the complex I subunit 1 family.

Its subcellular location is the mitochondrion inner membrane. It carries out the reaction a ubiquinone + NADH + 5 H(+)(in) = a ubiquinol + NAD(+) + 4 H(+)(out). In terms of biological role, core subunit of the mitochondrial membrane respiratory chain NADH dehydrogenase (Complex I) that is believed to belong to the minimal assembly required for catalysis. Complex I functions in the transfer of electrons from NADH to the respiratory chain. The immediate electron acceptor for the enzyme is believed to be ubiquinone. The protein is NADH-ubiquinone oxidoreductase chain 1 (ND1) of Artemia salina (Brine shrimp).